Reading from the N-terminus, the 121-residue chain is Splicing factor 3B subunit 6 (121 aa).

Positions 12–25 are interaction with pre-mRNA branch site; sequence EVNRLLYVRNLPYK. Positions 15–90 constitute an RRM domain; that stretch reads RLLYVRNLPY…RYLVVLYYQS (76 aa).

The protein belongs to the SF3B6 family. As to quaternary structure, component of splicing factor SF3B complex. Component of the U11/U12 snRNPs that are part of the U12-type spliceosome.

It localises to the nucleus. Functionally, involved in pre-mRNA splicing as a component of the splicing factor SF3B complex. SF3B complex is required for 'A' complex assembly formed by the stable binding of U2 snRNP to the branchpoint sequence (BPS) in pre-mRNA. Directly contacts the pre-mRNA branch site adenosine for the first catalytic step of splicing. Enters the spliceosome and associates with the pre-mRNA branch site as part of the 17S U2 or, in the case of the minor spliceosome, as part of the 18S U11/U12 snRNP complex, and thus may facilitate the interaction of these snRNP with the branch sites of U2 and U12 respectively. In Drosophila melanogaster (Fruit fly), this protein is Splicing factor 3B subunit 6.